Here is a 295-residue protein sequence, read N- to C-terminus: Ribosomal RNA small subunit methyltransferase A (295 aa).

S-adenosyl-L-methionine is bound by residues asparagine 29, leucine 31, glycine 56, glutamate 77, aspartate 102, and asparagine 128.

The protein belongs to the class I-like SAM-binding methyltransferase superfamily. rRNA adenine N(6)-methyltransferase family. RsmA subfamily.

It is found in the cytoplasm. The catalysed reaction is adenosine(1518)/adenosine(1519) in 16S rRNA + 4 S-adenosyl-L-methionine = N(6)-dimethyladenosine(1518)/N(6)-dimethyladenosine(1519) in 16S rRNA + 4 S-adenosyl-L-homocysteine + 4 H(+). Specifically dimethylates two adjacent adenosines (A1518 and A1519) in the loop of a conserved hairpin near the 3'-end of 16S rRNA in the 30S particle. May play a critical role in biogenesis of 30S subunits. The sequence is that of Ribosomal RNA small subunit methyltransferase A from Listeria monocytogenes serotype 4a (strain HCC23).